The chain runs to 255 residues: Serine/threonine-protein phosphatase PP1 (255 aa).

Asp-2, His-4, Asp-30, and Asn-62 together coordinate Mn(2+). His-63 serves as the catalytic Proton donor. Residues His-111 and His-186 each coordinate Mn(2+).

Belongs to the PPP phosphatase family. PP-1 subfamily. It depends on Mn(2+) as a cofactor.

The catalysed reaction is O-phospho-L-seryl-[protein] + H2O = L-seryl-[protein] + phosphate. It catalyses the reaction O-phospho-L-threonyl-[protein] + H2O = L-threonyl-[protein] + phosphate. This Brassica napus (Rape) protein is Serine/threonine-protein phosphatase PP1.